A 554-amino-acid chain; its full sequence is 2-succinyl-5-enolpyruvyl-6-hydroxy-3-cyclohexene-1-carboxylate synthase (554 aa).

The protein belongs to the TPP enzyme family. MenD subfamily. As to quaternary structure, homodimer. Requires Mg(2+) as cofactor. It depends on Mn(2+) as a cofactor. Thiamine diphosphate serves as cofactor.

The enzyme catalyses isochorismate + 2-oxoglutarate + H(+) = 5-enolpyruvoyl-6-hydroxy-2-succinyl-cyclohex-3-ene-1-carboxylate + CO2. It functions in the pathway quinol/quinone metabolism; 1,4-dihydroxy-2-naphthoate biosynthesis; 1,4-dihydroxy-2-naphthoate from chorismate: step 2/7. Its pathway is quinol/quinone metabolism; menaquinone biosynthesis. In terms of biological role, catalyzes the thiamine diphosphate-dependent decarboxylation of 2-oxoglutarate and the subsequent addition of the resulting succinic semialdehyde-thiamine pyrophosphate anion to isochorismate to yield 2-succinyl-5-enolpyruvyl-6-hydroxy-3-cyclohexene-1-carboxylate (SEPHCHC). This is 2-succinyl-5-enolpyruvyl-6-hydroxy-3-cyclohexene-1-carboxylate synthase from Lactococcus lactis subsp. cremoris (strain SK11).